The primary structure comprises 746 residues: NAD(P)H-quinone oxidoreductase subunit 5, chloroplastic (746 aa).

Transmembrane regions (helical) follow at residues 9–29 (WIIP…LLLV), 40–60 (WTFP…NLSI), 89–109 (IDPL…MVLI), 122–139 (LRFF…LGLV), 147–167 (IYIF…FWFT), 185–205 (GDFG…SFEF), 219–239 (NGVN…GAVA), 258–278 (TPIS…FLVA), 280–300 (LLPL…IGVI), 327–347 (LGYI…FHLI), 396–416 (TTFL…CFWS), 425–445 (WLYS…TAFY), 546–566 (LLPL…GIPF), 605–625 (IYSV…YGSI), and 722–742 (YLFV…FYFF).

The protein belongs to the complex I subunit 5 family. As to quaternary structure, NDH is composed of at least 16 different subunits, 5 of which are encoded in the nucleus.

Its subcellular location is the plastid. It localises to the chloroplast thylakoid membrane. It carries out the reaction a plastoquinone + NADH + (n+1) H(+)(in) = a plastoquinol + NAD(+) + n H(+)(out). It catalyses the reaction a plastoquinone + NADPH + (n+1) H(+)(in) = a plastoquinol + NADP(+) + n H(+)(out). NDH shuttles electrons from NAD(P)H:plastoquinone, via FMN and iron-sulfur (Fe-S) centers, to quinones in the photosynthetic chain and possibly in a chloroplast respiratory chain. The immediate electron acceptor for the enzyme in this species is believed to be plastoquinone. Couples the redox reaction to proton translocation, and thus conserves the redox energy in a proton gradient. This chain is NAD(P)H-quinone oxidoreductase subunit 5, chloroplastic (ndhF), found in Calycanthus floridus var. glaucus (Eastern sweetshrub).